A 479-amino-acid polypeptide reads, in one-letter code: MASSDTQGKRVAVIGGGLVGALNACFLAKRNFQVDVYEAREDIRVAKSARGRSINLALSYRGRQALKAIGLEDQIVSKGVPMKARMIHSLSGKKSAIPYGNKSQYILSISRENLNKDLLTAVESYANAKVHFGHKLSKCIPEEGVLTVLGPDKVPRDVTCDLVVGCDGAYSTVRAHLMKKPRFDYTQQYIPHGYMELTIPPKNGEYAMEPNCLHIWPRNAYMMIALPNMDKSFTCTLFMPFEEFERLPTRSDVLDFFQKNFPDAIPLMGEQALMRDFFLLPAQPMISVKCSPFHLKSHCVLMGDAAHAIVPFFGQGMNAGFEDCLVFDELMDKFNNNLSMCLPEFSRFRIPDDHAISDLSMYNYIEMRAHVNSRWFLFQKLLDKFLHAIMPSTFIPLYTMVAFTRIRYHEAVLRWHWQKKVINRGLFVLGSLIAIGGTYLLVHHLSLRPLEFLRRPAWMGTTGYWTRSTDISLQVPWSY.

FAD-binding positions include Val19, 37–40 (YEAR), and Ala57. Positions 85 and 99 each coordinate L-kynurenine. Residues Arg111, Leu136, Thr172, Asp304, and 317–318 (MN) each bind FAD. Positions 363 and 398 each coordinate L-kynurenine. A run of 2 helical transmembrane segments spans residues 385–404 (FLHAIMPSTFIPLYTMVAFT) and 425–445 (GLFVLGSLIAIGGTYLLVHHL).

This sequence belongs to the aromatic-ring hydroxylase family. KMO subfamily. It depends on FAD as a cofactor. Expressed by organs containing secondary lymphoid tissue, such as the lung, spleen, mesenteric lymph node, thymus and peripheral lymph nodes.

Its subcellular location is the mitochondrion outer membrane. The enzyme catalyses L-kynurenine + NADPH + O2 + H(+) = 3-hydroxy-L-kynurenine + NADP(+) + H2O. The protein operates within cofactor biosynthesis; NAD(+) biosynthesis; quinolinate from L-kynurenine: step 1/3. Its function is as follows. Catalyzes the hydroxylation of L-kynurenine (L-Kyn) to form 3-hydroxy-L-kynurenine (L-3OHKyn). Required for synthesis of quinolinic acid, a neurotoxic NMDA receptor antagonist and potential endogenous inhibitor of NMDA receptor signaling in axonal targeting, synaptogenesis and apoptosis during brain development. Quinolinic acid may also affect NMDA receptor signaling in pancreatic beta cells, osteoblasts, myocardial cells, and the gastrointestinal tract. This is Kynurenine 3-monooxygenase from Mus musculus (Mouse).